The sequence spans 477 residues: 3-sulfolactaldehyde dehydrogenase (477 aa).

NAD(+) is bound at residue 232–233; the sequence is GS. The active-site Proton acceptor is the E252. L253 serves as a coordination point for NAD(+). The active-site Nucleophile is C286. Residue E380 coordinates NAD(+).

This sequence belongs to the aldehyde dehydrogenase family.

It carries out the reaction (2S)-3-sulfolactaldehyde + NAD(+) + H2O = (2S)-3-sulfolactate + NADH + 2 H(+). Part of the sulfo-TAL (or sulfo-SFT) pathway, a D-sulfoquinovose degradation pathway that produces sulfolactate (SL). Catalyzes the oxidation of 3-sulfolactaldehyde (SLA) to sulfolactate (SL). In Priestia aryabhattai (Bacillus aryabhattai), this protein is 3-sulfolactaldehyde dehydrogenase.